The primary structure comprises 101 residues: Translation initiation factor IF-1, chloroplastic (101 aa).

A compositionally biased stretch (polar residues) spans 1 to 10; sequence MNQLKKSFSP. Positions 1 to 35 are disordered; sequence MNQLKKSFSPTEGKKDQNNLINDPQKNKQKKQKKL. An S1-like domain is found at 26 to 101; that stretch reads KNKQKKQKKL…TKGRITYRHR (76 aa).

Belongs to the IF-1 family. In terms of assembly, component of the 30S ribosomal translation pre-initiation complex which assembles on the 30S ribosome in the order IF-2 and IF-3, IF-1 and N-formylmethionyl-tRNA(fMet); mRNA recruitment can occur at any time during PIC assembly.

The protein resides in the plastid. It is found in the chloroplast. One of the essential components for the initiation of protein synthesis. Stabilizes the binding of IF-2 and IF-3 on the 30S subunit to which N-formylmethionyl-tRNA(fMet) subsequently binds. Helps modulate mRNA selection, yielding the 30S pre-initiation complex (PIC). Upon addition of the 50S ribosomal subunit IF-1, IF-2 and IF-3 are released leaving the mature 70S translation initiation complex. The sequence is that of Translation initiation factor IF-1, chloroplastic from Tetradesmus obliquus (Green alga).